The following is a 910-amino-acid chain: Translation factor GUF1 homolog, mitochondrial (910 aa).

Residues 126–188 (RRGNGLPFER…DGGGAPEHPQ (63 aa)) form a disordered region. The region spanning 189 to 366 (QNVRNFCILA…RIVSDIPCPA (178 aa)) is the tr-type G domain. Residues 198 to 205 (AHIDSGKS), 259 to 263 (DTPGH), and 313 to 316 (NKID) contribute to the GTP site. The segment at 639-683 (GSGDGRADGSADGSADGSADGSGDSSAHGSSDRRGAGCARGSDDI) is disordered. Residues 646 to 667 (DGSADGSADGSADGSGDSSAHG) show a composition bias toward low complexity.

This sequence belongs to the TRAFAC class translation factor GTPase superfamily. Classic translation factor GTPase family. LepA subfamily.

The protein resides in the mitochondrion inner membrane. The catalysed reaction is GTP + H2O = GDP + phosphate + H(+). Promotes mitochondrial protein synthesis. May act as a fidelity factor of the translation reaction, by catalyzing a one-codon backward translocation of tRNAs on improperly translocated ribosomes. Binds to mitochondrial ribosomes in a GTP-dependent manner. The protein is Translation factor GUF1 homolog, mitochondrial of Plasmodium vivax (strain Salvador I).